Reading from the N-terminus, the 348-residue chain is Phospho-2-dehydro-3-deoxyheptonate aldolase, Trp-sensitive (348 aa).

This sequence belongs to the class-I DAHP synthase family.

It catalyses the reaction D-erythrose 4-phosphate + phosphoenolpyruvate + H2O = 7-phospho-2-dehydro-3-deoxy-D-arabino-heptonate + phosphate. It functions in the pathway metabolic intermediate biosynthesis; chorismate biosynthesis; chorismate from D-erythrose 4-phosphate and phosphoenolpyruvate: step 1/7. In terms of biological role, stereospecific condensation of phosphoenolpyruvate (PEP) and D-erythrose-4-phosphate (E4P) giving rise to 3-deoxy-D-arabino-heptulosonate-7-phosphate (DAHP). This chain is Phospho-2-dehydro-3-deoxyheptonate aldolase, Trp-sensitive (aroH), found in Enterobacter agglomerans (Erwinia herbicola).